Here is a 317-residue protein sequence, read N- to C-terminus: L-lactate dehydrogenase (317 aa).

Residues Val-17, Asp-38, Lys-43, Tyr-69, and 83-84 (GA) contribute to the NAD(+) site. Substrate-binding residues include Gln-86 and Arg-92. NAD(+)-binding positions include Ser-105, 122-124 (ATN), and Ser-147. 124-127 (NPVD) lines the substrate pocket. Residue 152 to 155 (DSAR) participates in substrate binding. The beta-D-fructose 1,6-bisphosphate site is built by Arg-157 and His-172. The Proton acceptor role is filled by His-179. Residue Tyr-224 is modified to Phosphotyrosine. Substrate is bound at residue Thr-233.

It belongs to the LDH/MDH superfamily. LDH family. Homotetramer.

It localises to the cytoplasm. It catalyses the reaction (S)-lactate + NAD(+) = pyruvate + NADH + H(+). It functions in the pathway fermentation; pyruvate fermentation to lactate; (S)-lactate from pyruvate: step 1/1. Allosterically activated by fructose 1,6-bisphosphate (FBP). Its function is as follows. Catalyzes the conversion of lactate to pyruvate. In Bacillus velezensis (strain DSM 23117 / BGSC 10A6 / LMG 26770 / FZB42) (Bacillus amyloliquefaciens subsp. plantarum), this protein is L-lactate dehydrogenase.